The chain runs to 107 residues: Large ribosomal subunit protein eL21 (107 aa).

Belongs to the eukaryotic ribosomal protein eL21 family.

The chain is Large ribosomal subunit protein eL21 (rpl21e) from Aeropyrum pernix (strain ATCC 700893 / DSM 11879 / JCM 9820 / NBRC 100138 / K1).